The primary structure comprises 128 residues: UPF0325 protein NT01EI_0832 (128 aa).

This sequence belongs to the UPF0325 family.

In Edwardsiella ictaluri (strain 93-146), this protein is UPF0325 protein NT01EI_0832.